Consider the following 321-residue polypeptide: Lipoyl synthase (321 aa).

The [4Fe-4S] cluster site is built by cysteine 68, cysteine 73, cysteine 79, cysteine 94, cysteine 98, cysteine 101, and serine 308. The 218-residue stretch at 80-297 folds into the Radical SAM core domain; that stretch reads FNHGTATFMI…KAEAMAMGFT (218 aa).

The protein belongs to the radical SAM superfamily. Lipoyl synthase family. [4Fe-4S] cluster serves as cofactor.

It localises to the cytoplasm. The enzyme catalyses [[Fe-S] cluster scaffold protein carrying a second [4Fe-4S](2+) cluster] + N(6)-octanoyl-L-lysyl-[protein] + 2 oxidized [2Fe-2S]-[ferredoxin] + 2 S-adenosyl-L-methionine + 4 H(+) = [[Fe-S] cluster scaffold protein] + N(6)-[(R)-dihydrolipoyl]-L-lysyl-[protein] + 4 Fe(3+) + 2 hydrogen sulfide + 2 5'-deoxyadenosine + 2 L-methionine + 2 reduced [2Fe-2S]-[ferredoxin]. Its pathway is protein modification; protein lipoylation via endogenous pathway; protein N(6)-(lipoyl)lysine from octanoyl-[acyl-carrier-protein]: step 2/2. Its function is as follows. Catalyzes the radical-mediated insertion of two sulfur atoms into the C-6 and C-8 positions of the octanoyl moiety bound to the lipoyl domains of lipoate-dependent enzymes, thereby converting the octanoylated domains into lipoylated derivatives. The chain is Lipoyl synthase from Cronobacter sakazakii (strain ATCC BAA-894) (Enterobacter sakazakii).